The sequence spans 134 residues: NADH-quinone oxidoreductase subunit A (134 aa).

A run of 3 helical transmembrane segments spans residues 12–32 (FAIY…LAAL), 64–84 (FYLV…LFAW), and 93–113 (WVGF…LVYL).

It belongs to the complex I subunit 3 family. In terms of assembly, NDH-1 is composed of 13 different subunits. Subunits NuoA, H, J, K, L, M, N constitute the membrane sector of the complex.

It localises to the cell inner membrane. It carries out the reaction a quinone + NADH + 5 H(+)(in) = a quinol + NAD(+) + 4 H(+)(out). Functionally, NDH-1 shuttles electrons from NADH, via FMN and iron-sulfur (Fe-S) centers, to quinones in the respiratory chain. The immediate electron acceptor for the enzyme in this species is believed to be ubiquinone. Couples the redox reaction to proton translocation (for every two electrons transferred, four hydrogen ions are translocated across the cytoplasmic membrane), and thus conserves the redox energy in a proton gradient. This Shewanella oneidensis (strain ATCC 700550 / JCM 31522 / CIP 106686 / LMG 19005 / NCIMB 14063 / MR-1) protein is NADH-quinone oxidoreductase subunit A.